The primary structure comprises 1008 residues: Collagen, type I, alpha 1a (1008 aa).

The span at 1–21 shows a compositional bias: pro residues; sequence SPAMPVPGPMGPMGPRGPPGS. Positions 1–920 are disordered; sequence SPAMPVPGPM…PQEKAPDPFR (920 aa). A compositionally biased stretch (basic and acidic residues) spans 39-53; that stretch reads NGEDGESGKPGRGGE. Residues 92–117 are compositionally biased toward low complexity; sequence TPGAMGPRGAAGAAGARGNDGAAGAA. The segment covering 119–132 has biased composition (pro residues); the sequence is PPGPTGPAGPPGFP. Gly residues predominate over residues 133–151; it reads GGPGAKGDAGAQGGRGPEG. Composition is skewed to low complexity over residues 152-195 and 204-230; these read PAGA…AGAP and SGPQ…APGV. A compositionally biased stretch (gly residues) spans 253-265; that stretch reads GARGGPGGRGFPG. 2 stretches are compositionally biased toward low complexity: residues 339–354 and 410–422; these read VGAR…PGPK and LPGE…PAGA. A compositionally biased stretch (basic and acidic residues) spans 423 to 435; that stretch reads RGDRGFPGERGAK. Low complexity-rich tracts occupy residues 437–456, 489–524, and 537–573; these read DAGA…QGMP, RGLT…ARGA, and AGFA…AGPT. The span at 604 to 617 shows a compositional bias: pro residues; that stretch reads PPGPSGNPGPPGPA. Low complexity predominate over residues 634–661; the sequence is PAGRPGELGAAGPPGPAGEKGSPGSEGA. The span at 696 to 709 shows a compositional bias: gly residues; that stretch reads GEAGGPSGPGGERG. Over residues 717–735 the composition is skewed to low complexity; it reads PGLAGAPGEPGREGSPGNE. Residues 761–771 are compositionally biased toward pro residues; the sequence is APGPPGAPGPV. The span at 785 to 806 shows a compositional bias: low complexity; that stretch reads PAGPAGSAGPSGPRGPAGAPGL. Over residues 807 to 821 the composition is skewed to basic and acidic residues; it reads RGDKGESGEAGERRG. The segment covering 832-868 has biased composition (low complexity); it reads SGSSGEQGPAGAAGPAGPRGPAGSAGSPGKDGMSGLP. Over residues 884 to 896 the composition is skewed to pro residues; the sequence is AGPPGPPGPPGAP. The Fibrillar collagen NC1 domain maps to 978-1008; that stretch reads TSRLPLLDLAPMDVGAPDQEFGLEVGPVCFL.

Belongs to the fibrillar collagen family.

The protein resides in the secreted. Its subcellular location is the extracellular space. The protein localises to the extracellular matrix. In Epinephelus aeneus (White grouper), this protein is Collagen, type I, alpha 1a.